The sequence spans 207 residues: Abscisic acid receptor PYL9 (207 aa).

The interval 31–197 (FPPSTTTATT…NLQMLAAVAE (167 aa)) is START-like. Residues Lys74, 104–109 (ASTSTE), 131–137 (RLRNYRS), and Glu162 each bind abscisate. The Gate loop motif lies at 100–104 (SGLPA). Positions 130–132 (HRL) match the Latch loop motif.

It belongs to the PYR/PYL/RCAR abscisic acid intracellular receptor family. As to quaternary structure, homodimer. Interacts with PP2C06. Interacts with PP2C50. Binding to PP2C50 is dependent on the presence of abscisic acid (ABA). Interacts with PP2C30 and PP2C53. Binding to PP2C30 and PP2C53 is dependent on the presence of ABA.

The protein resides in the cytoplasm. The protein localises to the cytosol. It is found in the nucleus. Involved in abscisic acid (ABA) signaling during seed germination and abiotic stress response. Acts as a positive regulator of ABA-mediated inhibition of seed germination, and tolerance to drought and cold stresses. Inhibits the activity of the protein phosphatases PP2C06 and PP2C09 when activated by abscisic acid (ABA). The polypeptide is Abscisic acid receptor PYL9 (Oryza sativa subsp. japonica (Rice)).